Reading from the N-terminus, the 1414-residue chain is Phenyloxazoline synthase MbtB (1414 aa).

The 74-residue stretch at 5 to 78 (TACSEIIRAE…AWSQLVSAGT (74 aa)) folds into the Carrier 1 domain. An O-(pantetheine 4'-phosphoryl)serine modification is found at Ser39. Residues 96 to 394 (EGEPFPLAPM…SSLLLDVDLT (299 aa)) form a condensation/cyclization region. Residues 579 to 975 (SYAQLRDQAS…RLPGVHAAAA (397 aa)) form an adenylation region. The 79-residue stretch at 1057–1135 (APRTVLQRAL…ALAQLLTGRE (79 aa)) folds into the Carrier 2 domain. Ser1094 carries the O-(pantetheine 4'-phosphoryl)serine modification. The interval 1188–1413 (GAVLVFPHAG…AVARMVSADV (226 aa)) is thioesterase.

It belongs to the ATP-dependent AMP-binding enzyme family. MbtB subfamily. The cofactor is pantetheine 4'-phosphate. Post-translationally, 4'-phosphopantetheine is transferred from CoA to a specific serine in each of the two carrier protein domains, leading to their activation from apo to holo forms.

It participates in siderophore biosynthesis; mycobactin biosynthesis. Functionally, involved in the initial steps of the mycobactin biosynthetic pathway. Putatively couples activated salicylic acid with serine or threonine and cyclizes this precursor to the hydroxyphenyloxazoline ring system present in this class of siderophores. This is Phenyloxazoline synthase MbtB (mbtB) from Mycobacterium bovis (strain ATCC BAA-935 / AF2122/97).